We begin with the raw amino-acid sequence, 607 residues long: UvrABC system protein C (607 aa).

The region spanning 15–94 is the GIY-YIG domain; the sequence is ENPGVYLMKN…IKRHRPYFNV (80 aa). In terms of domain architecture, UVR spans 204–239; sequence DQVLKLLIRLMNEASARLDYETAALRRDQIASIKEV.

It belongs to the UvrC family. As to quaternary structure, interacts with UvrB in an incision complex.

The protein localises to the cytoplasm. In terms of biological role, the UvrABC repair system catalyzes the recognition and processing of DNA lesions. UvrC both incises the 5' and 3' sides of the lesion. The N-terminal half is responsible for the 3' incision and the C-terminal half is responsible for the 5' incision. In Dehalococcoides mccartyi (strain CBDB1), this protein is UvrABC system protein C.